The sequence spans 499 residues: Beta-amylase (499 aa).

Substrate contacts are provided by Asp55, His95, and Asp103. The active-site Proton donor is the Glu188. Residues Lys298, His303, and Thr345 each coordinate substrate. Catalysis depends on Glu383, which acts as the Proton acceptor. Substrate contacts are provided by residues 384–385 (NA) and Arg423.

It belongs to the glycosyl hydrolase 14 family. Homotetramer.

The catalysed reaction is Hydrolysis of (1-&gt;4)-alpha-D-glucosidic linkages in polysaccharides so as to remove successive maltose units from the non-reducing ends of the chains.. The polypeptide is Beta-amylase (BMY1) (Ipomoea batatas (Sweet potato)).